A 254-amino-acid chain; its full sequence is 3-deoxy-manno-octulosonate cytidylyltransferase (254 aa).

This sequence belongs to the KdsB family.

Its subcellular location is the cytoplasm. It catalyses the reaction 3-deoxy-alpha-D-manno-oct-2-ulosonate + CTP = CMP-3-deoxy-beta-D-manno-octulosonate + diphosphate. The protein operates within nucleotide-sugar biosynthesis; CMP-3-deoxy-D-manno-octulosonate biosynthesis; CMP-3-deoxy-D-manno-octulosonate from 3-deoxy-D-manno-octulosonate and CTP: step 1/1. Activates KDO (a required 8-carbon sugar) for incorporation into bacterial lipopolysaccharide in Gram-negative bacteria. The protein is 3-deoxy-manno-octulosonate cytidylyltransferase of Lawsonia intracellularis (strain PHE/MN1-00).